A 201-amino-acid chain; its full sequence is Small ribosomal subunit protein uS4c (201 aa).

Positions 20-44 (GLTSKRPTVGSELRNQSRSTKKSQY) are disordered. In terms of domain architecture, S4 RNA-binding spans 89–150 (MRLDNILFRL…NKKSKTLIQN (62 aa)).

This sequence belongs to the universal ribosomal protein uS4 family. As to quaternary structure, part of the 30S ribosomal subunit. Contacts protein S5. The interaction surface between S4 and S5 is involved in control of translational fidelity.

It localises to the plastid. It is found in the chloroplast. In terms of biological role, one of the primary rRNA binding proteins, it binds directly to 16S rRNA where it nucleates assembly of the body of the 30S subunit. Its function is as follows. With S5 and S12 plays an important role in translational accuracy. This chain is Small ribosomal subunit protein uS4c (rps4), found in Lotus japonicus (Lotus corniculatus var. japonicus).